Reading from the N-terminus, the 262-residue chain is Alpha-tubulin N-acetyltransferase 1 (262 aa).

Residues methionine 1–phenylalanine 177 form the N-acetyltransferase domain. Phenylalanine 111–glutamine 124 lines the acetyl-CoA pocket.

The protein belongs to the acetyltransferase ATAT1 family. As to expression, expressed solely in touch receptor neurons.

It catalyses the reaction L-lysyl-[alpha-tubulin] + acetyl-CoA = N(6)-acetyl-L-lysyl-[alpha-tubulin] + CoA + H(+). Specifically acetylates 'Lys-40' in alpha-tubulin/mec-12 on the lumenal side of microtubules. Promotes microtubule destabilization and accelerates microtubule dynamics; this activity may be independent of acetylation activity. Acetylates alpha-tubulin with a slow enzymatic rate, due to a catalytic site that is not optimized for acetyl transfer. Enters the microtubule through each end and diffuses quickly throughout the lumen of microtubules. Acetylates only long/old microtubules because of its slow acetylation rate since it does not have time to act on dynamically unstable microtubules before the enzyme is released. Required for the maintenance of touch receptor neurons and possibly other type of neurons involved in locomotion. Regulates the number and localization of mitochondria in mechanosensory neurons. Plays a role in axonal transport. The polypeptide is Alpha-tubulin N-acetyltransferase 1 (Caenorhabditis elegans).